Here is a 310-residue protein sequence, read N- to C-terminus: CRAL-TRIO domain-containing protein YKL091C (310 aa).

The CRAL-TRIO domain occupies Glu-101 to Asn-274.

This Saccharomyces cerevisiae (strain ATCC 204508 / S288c) (Baker's yeast) protein is CRAL-TRIO domain-containing protein YKL091C.